The chain runs to 232 residues: Orotidine 5'-phosphate decarboxylase (232 aa).

Substrate contacts are provided by residues D13, K35, 62 to 71, T122, R182, Q191, G211, and R212; that span reads DLKFHDIPNT. Catalysis depends on K64, which acts as the Proton donor.

The protein belongs to the OMP decarboxylase family. Type 1 subfamily. In terms of assembly, homodimer.

The catalysed reaction is orotidine 5'-phosphate + H(+) = UMP + CO2. It functions in the pathway pyrimidine metabolism; UMP biosynthesis via de novo pathway; UMP from orotate: step 2/2. Its function is as follows. Catalyzes the decarboxylation of orotidine 5'-monophosphate (OMP) to uridine 5'-monophosphate (UMP). In Pseudomonas syringae pv. syringae (strain B728a), this protein is Orotidine 5'-phosphate decarboxylase.